The chain runs to 360 residues: MKSSIVAKLEALQERHEEVLAYLGDASVIADQDRFRALSREYAQLTDVTRCFKEWRSAQDDIEAAEMMLDDLEMREMAQEELKIAKARSEELEQQLQVLLLPKDPDDERDCFLEIRAGTGGDEAAIFAGDMFRMYSRYAETRRWKVEIMSASEGEHGGYKEIIAKISGDGVFGQLKFESGGHRVQRVPETESQGRIHTSACTVAVMPAIPEAELPEINAGDLRIDTFRSSGAGGQHVNTTDSAIRITHIPTGIVVECQDERSQHKNKAKAMSVLGARIRAAEMQKRQLAEASERRNLLGTGDRSDRNRTYNFPQGRVTDHRINLTLYRLDEVMEGKLDMLIQPIVQEYQADQLSALSEQD.

Gln235 is modified (N5-methylglutamine). Basic and acidic residues predominate over residues 291–308; it reads ASERRNLLGTGDRSDRNR. Residues 291 to 312 form a disordered region; sequence ASERRNLLGTGDRSDRNRTYNF.

This sequence belongs to the prokaryotic/mitochondrial release factor family. Methylated by PrmC. Methylation increases the termination efficiency of RF1.

It is found in the cytoplasm. Its function is as follows. Peptide chain release factor 1 directs the termination of translation in response to the peptide chain termination codons UAG and UAA. This Yersinia pseudotuberculosis serotype O:1b (strain IP 31758) protein is Peptide chain release factor 1.